A 436-amino-acid polypeptide reads, in one-letter code: MANPSPHQIYNVTWVITNVQTNTQANATSMLGTLTDAYPTLHVDLCDLVGDTWEPIVLNPTSVRPGAVLLSSSPKYGCKTTDRKKQQQTYPFYVCPGHAPSLGPKGTHCGGAQDGFCAAWGCETTGEAWWKPTSSWDYITVKRGSSPDNSCEGKCNPLVLQFTQKGRQASWDGPKMWGLRLYRTGYDPIALFTVSRQVSTITPPQAMGPNLVLPDQKPPSRQSQTGSKVATQRPQTNESAPRSVGPTTMGPKRIGTGDRLINLVQGTYLALNATDPNKTKDCWLCLVSRPPYYEGIAILGNYSNQTNPPPSCLSTPQHKLTISEVSGQGLCIGTVPKTHQALCNKTQQGHTGAHYLAAPNGTYWACNTGLTPCISMAVLNWTSDFCVLIELWPRVTYHQPEYVYTHFAKAVRFRREPISLTVALMLGGLTVGGIAA.

Met-1 is a signal peptide. At 2 to 436 the chain is on the extracellular side; sequence ANPSPHQIYN…GGLTVGGIAA (435 aa). Residues Asn-11 and Asn-26 are each glycosylated (N-linked (GlcNAc...) asparagine; by host). Intrachain disulfides connect Cys-95/Cys-117 and Cys-109/Cys-122. The segment at 203 to 255 is disordered; it reads PPQAMGPNLVLPDQKPPSRQSQTGSKVATQRPQTNESAPRSVGPTTMGPKRIG. Positions 219–240 are enriched in polar residues; sequence PSRQSQTGSKVATQRPQTNESA. 3 N-linked (GlcNAc...) asparagine; by host glycosylation sites follow: Asn-237, Asn-272, and Asn-277. A CXXC motif is present at residues 282–285; the sequence is CWLC. Asn-304, Asn-344, Asn-360, and Asn-380 each carry an N-linked (GlcNAc...) asparagine; by host glycan.

In terms of assembly, the mature envelope protein (Env) consists of a trimer of SU-TM heterodimers attached by a labile interchain disulfide bond. Specific enzymatic cleavages in vivo yield mature proteins. Envelope glycoproteins are synthesized as an inactive precursor that is N-glycosylated and processed likely by host cell furin or by a furin-like protease in the Golgi to yield the mature SU and TM proteins. The cleavage site between SU and TM requires the minimal sequence [KR]-X-[KR]-R.

It localises to the virion membrane. Its subcellular location is the host cell membrane. In terms of biological role, the surface protein (SU) attaches the virus to the host cell by binding to its receptor. This interaction triggers the refolding of the transmembrane protein (TM) and is thought to activate its fusogenic potential by unmasking its fusion peptide. Fusion occurs at the host cell plasma membrane. Functionally, the transmembrane protein (TM) acts as a class I viral fusion protein. Under the current model, the protein has at least 3 conformational states: pre-fusion native state, pre-hairpin intermediate state, and post-fusion hairpin state. During viral and target cell membrane fusion, the coiled coil regions (heptad repeats) assume a trimer-of-hairpins structure, positioning the fusion peptide in close proximity to the C-terminal region of the ectodomain. The formation of this structure appears to drive apposition and subsequent fusion of viral and target cell membranes. Membranes fusion leads to delivery of the nucleocapsid into the cytoplasm. The chain is Envelope glycoprotein from Feline leukemia virus (strain C/FS246).